A 344-amino-acid polypeptide reads, in one-letter code: Dihydroorotase (344 aa).

Residues histidine 13 and histidine 15 each contribute to the Zn(2+) site. Substrate-binding positions include 15 to 17 (HFR) and asparagine 41. Zn(2+) contacts are provided by lysine 98, histidine 135, and histidine 173. Lysine 98 carries the post-translational modification N6-carboxylysine. Histidine 135 serves as a coordination point for substrate. Leucine 218 contacts substrate. Aspartate 246 lines the Zn(2+) pocket. Residue aspartate 246 is part of the active site. Substrate contacts are provided by histidine 250 and alanine 262.

Belongs to the metallo-dependent hydrolases superfamily. DHOase family. Class II DHOase subfamily. In terms of assembly, homodimer. Zn(2+) serves as cofactor.

It carries out the reaction (S)-dihydroorotate + H2O = N-carbamoyl-L-aspartate + H(+). It functions in the pathway pyrimidine metabolism; UMP biosynthesis via de novo pathway; (S)-dihydroorotate from bicarbonate: step 3/3. Functionally, catalyzes the reversible cyclization of carbamoyl aspartate to dihydroorotate. This chain is Dihydroorotase, found in Pseudoalteromonas atlantica (strain T6c / ATCC BAA-1087).